We begin with the raw amino-acid sequence, 1148 residues long: Putative ATP-dependent RNA helicase rha-2 (1148 aa).

Positions 1 to 10 (MGKRKTKEDN) are enriched in basic and acidic residues. 2 disordered regions span residues 1 to 51 (MGKR…FAKE) and 101 to 163 (STKL…DAGN). Positions 138–160 (PTDDESSSEEEEEEEEGDNDIED) are enriched in acidic residues. In terms of domain architecture, Helicase ATP-binding spans 246 to 412 (VEAINENLVT…KLFPLLTPKV (167 aa)). 259 to 266 (GETGSGKT) provides a ligand contact to ATP. The DEAH box motif lies at 355–358 (DEAH). In terms of domain architecture, Helicase C-terminal spans 463–703 (EVKQLITKLK…QLVLHLKSMN (241 aa)).

Belongs to the DEAD box helicase family. DEAH subfamily.

It carries out the reaction ATP + H2O = ADP + phosphate + H(+). Its function is as follows. Probable ATP-binding RNA helicase. The sequence is that of Putative ATP-dependent RNA helicase rha-2 (rha-2) from Caenorhabditis elegans.